Reading from the N-terminus, the 403-residue chain is RNA-binding motif, single-stranded-interacting protein 1 (403 aa).

The interval 30–56 (PAHPMAPPSPSTTSSNNNSSSSSNSGW) is disordered. Residues 40–54 (STTSSNNNSSSSSNS) are compositionally biased toward low complexity. RRM domains lie at 62-135 (TNLY…MAKQ) and 141-226 (TNLY…FADG). Position 208 is a phosphothreonine (T208).

Its subcellular location is the nucleus. Functionally, single-stranded DNA binding protein that interacts with the region upstream of the C-myc gene. Binds specifically to the DNA sequence motif 5'-[AT]CT[AT][AT]T-3'. Probably has a role in DNA replication. The sequence is that of RNA-binding motif, single-stranded-interacting protein 1 (RBMS1) from Bos taurus (Bovine).